We begin with the raw amino-acid sequence, 352 residues long: UDP-N-acetylglucosamine--N-acetylmuramyl-(pentapeptide) pyrophosphoryl-undecaprenol N-acetylglucosamine transferase (352 aa).

UDP-N-acetyl-alpha-D-glucosamine contacts are provided by Ser195 and Gln287.

It belongs to the glycosyltransferase 28 family. MurG subfamily.

The protein resides in the cell membrane. The catalysed reaction is Mur2Ac(oyl-L-Ala-gamma-D-Glu-L-Lys-D-Ala-D-Ala)-di-trans,octa-cis-undecaprenyl diphosphate + UDP-N-acetyl-alpha-D-glucosamine = beta-D-GlcNAc-(1-&gt;4)-Mur2Ac(oyl-L-Ala-gamma-D-Glu-L-Lys-D-Ala-D-Ala)-di-trans,octa-cis-undecaprenyl diphosphate + UDP + H(+). The protein operates within cell wall biogenesis; peptidoglycan biosynthesis. Its function is as follows. Cell wall formation. Catalyzes the transfer of a GlcNAc subunit on undecaprenyl-pyrophosphoryl-MurNAc-pentapeptide (lipid intermediate I) to form undecaprenyl-pyrophosphoryl-MurNAc-(pentapeptide)GlcNAc (lipid intermediate II). This Streptococcus pneumoniae (strain Hungary19A-6) protein is UDP-N-acetylglucosamine--N-acetylmuramyl-(pentapeptide) pyrophosphoryl-undecaprenol N-acetylglucosamine transferase.